The following is a 44-amino-acid chain: uncharacterized protein (44 aa).

The disordered stretch occupies residues 22 to 44; the sequence is LNSAPAFKSSQNTSTQAKPTFSN.

This is an uncharacterized protein from Dictyostelium discoideum (Social amoeba).